The primary structure comprises 538 residues: Potassium channel subfamily K member 10 (538 aa).

Over 1–71 (MFFLYTDFFL…GLQTVMKWKT (71 aa)) the chain is Cytoplasmic. Residues 72 to 92 (VVAIFVVVVVYLVTGGLVFRA) form a helical membrane-spanning segment. 3 N-linked (GlcNAc...) asparagine glycosylation sites follow: N144, N147, and N148. Positions 154 to 180 (LGSAFFFAGTVITTIGYGNIAPSTEGG) form an intramembrane region, pore-forming. 4 residues coordinate K(+): T167, I168, G169, and Y170. The selectivity filter 1 stretch occupies residues 167-172 (TIGYGN). The helical transmembrane segment at 182–202 (IFCILYAIFGIPLFGFLLAGI) threads the bilayer. Topologically, residues 203-233 (GDQLGTIFGKSIARVEKVFRKKQVSQTKIRV) are cytoplasmic. The helical transmembrane segment at 234–254 (ISTILFILAGCIVFVTIPAVI) threads the bilayer. The segment at residues 263–294 (ALESIYFVVVTLTTVGFGDFVAGGNAGINYRE) is an intramembrane region (pore-forming). Residues T276, V277, G278, and F279 each contribute to the K(+) site. Positions 276–281 (TVGFGD) are selectivity filter 2. A helical membrane pass occupies residues 299-319 (LVWFWILVGLAYFAAVLSMIG). Topologically, residues 320-538 (DWLRVLSKKT…ENNSLLEDRN (219 aa)) are cytoplasmic. A compositionally biased stretch (polar residues) spans 412–421 (SQESINNRPN). Disordered stretches follow at residues 412–443 (SQES…EDNI) and 510–538 (QHAE…EDRN). Residues 522 to 538 (DTKDREPENNSLLEDRN) are compositionally biased toward basic and acidic residues.

This sequence belongs to the two pore domain potassium channel (TC 1.A.1.8) family. Homodimer; disulfide-linked. Forms heterodimers with other 2-pore domain K(+) channel subunits, such as KCNK2, KCNK4 and KCNK18. Abundantly expressed in pancreas and kidney and to a lower level in brain, testis, colon, and small intestine. In brain, mainly expressed in cerebellum, occipital lobe, putamen, and thalamus. No expression is detected in amygdala and spinal cord. As to expression, strongly expressed in kidney (primarily in the proximal tubule) and pancreas. In terms of tissue distribution, abundantly expressed in brain.

It localises to the cell membrane. The enzyme catalyses K(+)(in) = K(+)(out). The catalysed reaction is Rb(+)(in) = Rb(+)(out). It catalyses the reaction Cs(+)(in) = Cs(+)(out). Activated by various stimuli including acidic pH, anesthetics chloroform, halothane and isoflurane, mechanical stretch, lipids such as arachidonic, docosahexaenoic and linoleic polyunsaturated fatty acids and lysophosphatidylcholine and lysophosphatidylinositol lysophospholipids. Inhibited by norfluoxetine, the active metabolite of antidepressant fluoxetine (Prozac). In terms of biological role, k(+) channel that conducts voltage-dependent outward rectifying currents upon membrane depolarization. Voltage sensing is coupled to K(+) electrochemical gradient in an 'ion flux gating' mode where outward but not inward ion flow opens the gate. Converts to voltage-independent 'leak' conductance mode upon stimulation by various stimuli including mechanical membrane stretch, acidic pH, heat and lipids. Homo- and heterodimerizes to form functional channels with distinct regulatory and gating properties. In trigeminal ganglia sensory neurons, the heterodimer of KCNK10/TREK-2 and KCNK18/TRESK inhibits neuronal firing and neurogenic inflammation by stabilizing the resting membrane potential at K(+) equilibrium potential as well as by regulating the threshold of action potentials and the spike frequency. Permeable to other monovalent ions such as Rb(+) and Cs(+). The protein is Potassium channel subfamily K member 10 of Homo sapiens (Human).